The primary structure comprises 439 residues: Proline--tRNA ligase (439 aa).

This sequence belongs to the class-II aminoacyl-tRNA synthetase family. ProS type 2 subfamily. Homodimer.

The protein localises to the cytoplasm. The enzyme catalyses tRNA(Pro) + L-proline + ATP = L-prolyl-tRNA(Pro) + AMP + diphosphate. Functionally, catalyzes the attachment of proline to tRNA(Pro) in a two-step reaction: proline is first activated by ATP to form Pro-AMP and then transferred to the acceptor end of tRNA(Pro). This Parvibaculum lavamentivorans (strain DS-1 / DSM 13023 / NCIMB 13966) protein is Proline--tRNA ligase.